The primary structure comprises 202 residues: Small ribosomal subunit protein uS4 (202 aa).

An S4 RNA-binding domain is found at 93-156 (RRLDNMVYRL…KDLKIISEAV (64 aa)).

It belongs to the universal ribosomal protein uS4 family. In terms of assembly, part of the 30S ribosomal subunit. Contacts protein S5. The interaction surface between S4 and S5 is involved in control of translational fidelity.

One of the primary rRNA binding proteins, it binds directly to 16S rRNA where it nucleates assembly of the body of the 30S subunit. Functionally, with S5 and S12 plays an important role in translational accuracy. This chain is Small ribosomal subunit protein uS4, found in Pediococcus pentosaceus (strain ATCC 25745 / CCUG 21536 / LMG 10740 / 183-1w).